The primary structure comprises 57 residues: Cytochrome b-c1 complex subunit 10, mitochondrial (57 aa).

Topologically, residues 1–23 (MAGTSGLLNAVKPKIQTIDIQAA) are mitochondrial matrix. The helical transmembrane segment at 24–44 (AGWGIAAAAGAIWVVQPFGWI) threads the bilayer. Over 45–57 (KKTFIDPPPTEEK) the chain is Mitochondrial intermembrane.

It belongs to the UQCR11/QCR10 family. Component of the ubiquinol-cytochrome c oxidoreductase (cytochrome b-c1 complex, complex III, CIII), a multisubunit enzyme composed of 10 subunits. The complex is composed of 3 respiratory subunits cytochrome b (MT-CYB), cytochrome c1 (CYC1-1 or CYC1-2) and Rieske protein (UCR1-1 or UCR1-2), 2 core protein subunits MPPalpha1 (or MPPalpha2) and MPPB, and 5 low-molecular weight protein subunits QCR7-1 (or QCR7-2), UCRQ-1 (or UCRQ-2), QCR9, UCRY and probably QCR6-1 (or QCR6-2). The complex exists as an obligatory dimer and forms supercomplexes (SCs) in the inner mitochondrial membrane with NADH-ubiquinone oxidoreductase (complex I, CI), resulting in different assemblies (supercomplexes SCI(1)III(2) and SCI(2)III(4)).

It localises to the mitochondrion inner membrane. Functionally, component of the ubiquinol-cytochrome c oxidoreductase, a multisubunit transmembrane complex that is part of the mitochondrial electron transport chain which drives oxidative phosphorylation. The respiratory chain contains 3 multisubunit complexes succinate dehydrogenase (complex II, CII), ubiquinol-cytochrome c oxidoreductase (cytochrome b-c1 complex, complex III, CIII) and cytochrome c oxidase (complex IV, CIV), that cooperate to transfer electrons derived from NADH and succinate to molecular oxygen, creating an electrochemical gradient over the inner membrane that drives transmembrane transport and the ATP synthase. The cytochrome b-c1 complex catalyzes electron transfer from ubiquinol to cytochrome c, linking this redox reaction to translocation of protons across the mitochondrial inner membrane, with protons being carried across the membrane as hydrogens on the quinol. In the process called Q cycle, 2 protons are consumed from the matrix, 4 protons are released into the intermembrane space and 2 electrons are passed to cytochrome c. The sequence is that of Cytochrome b-c1 complex subunit 10, mitochondrial (UCRY) from Arabidopsis thaliana (Mouse-ear cress).